A 298-amino-acid polypeptide reads, in one-letter code: Quinolinate synthase (298 aa).

Residues histidine 19 and serine 36 each contribute to the iminosuccinate site. Cysteine 81 lines the [4Fe-4S] cluster pocket. Iminosuccinate contacts are provided by residues 107–109 and serine 124; that span reads YVN. Cysteine 168 contacts [4Fe-4S] cluster. Iminosuccinate contacts are provided by residues 193–195 and threonine 210; that span reads HPE. Position 254 (cysteine 254) interacts with [4Fe-4S] cluster.

Belongs to the quinolinate synthase family. Type 2 subfamily. It depends on [4Fe-4S] cluster as a cofactor.

The protein localises to the cytoplasm. It carries out the reaction iminosuccinate + dihydroxyacetone phosphate = quinolinate + phosphate + 2 H2O + H(+). The protein operates within cofactor biosynthesis; NAD(+) biosynthesis; quinolinate from iminoaspartate: step 1/1. Its activity is regulated as follows. Inhibited by 4,5 dithiohydroxyphthalic acid (DTHPA) analogs, which bind to the catalytic iron site of the [4Fe-4S] cluster. In terms of biological role, catalyzes the condensation of iminoaspartate with dihydroxyacetone phosphate to form quinolinate. The sequence is that of Quinolinate synthase from Thermotoga maritima (strain ATCC 43589 / DSM 3109 / JCM 10099 / NBRC 100826 / MSB8).